Reading from the N-terminus, the 286-residue chain is B3 domain-containing protein REM11 (286 aa).

Residues Met-1–Gln-70 constitute a DNA-binding region (TF-B3 1). Residues Ser-68–Ser-114 are disordered. Residues Lys-78–Ser-89 show a composition bias toward basic and acidic residues. A DNA-binding region (TF-B3 2) is located at residues Asn-119–Phe-219.

The protein resides in the nucleus. This chain is B3 domain-containing protein REM11 (REM11), found in Arabidopsis thaliana (Mouse-ear cress).